The following is a 483-amino-acid chain: MNLKELLNNIEAKIYGKVSPIEVRNLTKDSRNVGFGDIFIANKGKQFDGNDFSPLAIENGAIAIASSIYNPFLSVVQIVSSNLPQLEAELSAKYYNYPSKKLCIVGVTGTNGKTTVSHLIKTLFDGCNKPSGLIGTIEHVLGNNRIQDGYTTPESCLLQKYLAEMVKNRLTSAVMEVSSVGLVLERLAEVDFDVGVLTNITLDHLDFHGSFEEYINAKLKLFSKLPATGLAVVNGDLSYASRFLEMTQAQPITYGIECPADYRAMHLRSSPFGTDFDLVYRGESLPCRLPLIGKHNVYNILAAIAVAHQHCNGDLQQLISLAANVESPRGRLEPVFSGPCPIYIDYAHTPDALENVCKTLHALLPEQGKLIVVFGCGGDRDQSKRQIMAEVVERYGFAVVTSDNPRGEDPEEIIKAICSGFVKRNFSIEIDRKQAITYALSIASDRDIVLVAGKGHETYQIFKHQTIAFDDKEIVREVLSSHV.

Ser-30 is a UDP-N-acetyl-alpha-D-muramoyl-L-alanyl-D-glutamate binding site. 109-115 (GTNGKTT) lines the ATP pocket. UDP-N-acetyl-alpha-D-muramoyl-L-alanyl-D-glutamate contacts are provided by residues 151–152 (TT), Ser-178, and Arg-186. Lys-218 bears the N6-carboxylysine mark. Meso-2,6-diaminopimelate contacts are provided by residues Arg-380, 403-406 (DNPR), Gly-453, and Glu-457. A Meso-diaminopimelate recognition motif motif is present at residues 403-406 (DNPR).

The protein belongs to the MurCDEF family. MurE subfamily. Mg(2+) is required as a cofactor. In terms of processing, carboxylation is probably crucial for Mg(2+) binding and, consequently, for the gamma-phosphate positioning of ATP.

It is found in the cytoplasm. It carries out the reaction UDP-N-acetyl-alpha-D-muramoyl-L-alanyl-D-glutamate + meso-2,6-diaminopimelate + ATP = UDP-N-acetyl-alpha-D-muramoyl-L-alanyl-gamma-D-glutamyl-meso-2,6-diaminopimelate + ADP + phosphate + H(+). The protein operates within cell wall biogenesis; peptidoglycan biosynthesis. Functionally, catalyzes the addition of meso-diaminopimelic acid to the nucleotide precursor UDP-N-acetylmuramoyl-L-alanyl-D-glutamate (UMAG) in the biosynthesis of bacterial cell-wall peptidoglycan. The chain is UDP-N-acetylmuramoyl-L-alanyl-D-glutamate--2,6-diaminopimelate ligase from Chlamydia caviae (strain ATCC VR-813 / DSM 19441 / 03DC25 / GPIC) (Chlamydophila caviae).